The primary structure comprises 157 residues: MAELKQLYIFTDGSCLGNPGPGGYGVVMKYKHQQHEIADGFSLTTNNRMELLAPIIALETLYEPCNIILTSDSQYMRQGIMTWIHGWKKKGWITSTKQPVKNVDLWKRLDAVSQLHKIDWHWVKGHAGHIENERCDVLARKAAEAKPQQVDTGYNPE.

An RNase H type-1 domain is found at 3-144 (ELKQLYIFTD…CDVLARKAAE (142 aa)). Residues D12, E50, D72, and D136 each coordinate Mg(2+).

This sequence belongs to the RNase H family. Monomer. Requires Mg(2+) as cofactor.

The protein resides in the cytoplasm. It carries out the reaction Endonucleolytic cleavage to 5'-phosphomonoester.. Its function is as follows. Endonuclease that specifically degrades the RNA of RNA-DNA hybrids. The protein is Ribonuclease H of Shewanella frigidimarina (strain NCIMB 400).